The following is a 219-amino-acid chain: uncharacterized protein (219 aa).

Residues 1-15 (MLKLTTTSVTFHVLR) lie on the Cytoplasmic side of the membrane. A helical transmembrane segment spans residues 16–36 (YFQLGLSVTNLLLASFAIITN). Topologically, residues 37–41 (YKVDR) are vacuolar. The chain crosses the membrane as a helical span at residues 42–62 (ILRLSLAVSIISSVYFGIVRF). Position 63 (L63) is a topological domain, cytoplasmic. The chain crosses the membrane as a helical span at residues 64–84 (PVLLIFVMEIVQTVLWFTAFV). Over 85–116 (TLASKFGSMSCSSMPRGINFDYSGSCKIAKID) the chain is Vacuolar. A helical transmembrane segment spans residues 117-137 (ILPEAVLFILFLATTYASYIT). Over 138 to 219 (VLSQAKENGS…VIDGSIEHSS (82 aa)) the chain is Cytoplasmic. The segment at 176–219 (PLLDLEVQEDARTETESIEDSTDSEDNANIEQEKVIDGSIEHSS) is disordered. The segment covering 191-203 (ESIEDSTDSEDNA) has biased composition (acidic residues). Residues 206–219 (EQEKVIDGSIEHSS) are compositionally biased toward basic and acidic residues.

The protein localises to the vacuole membrane. This is an uncharacterized protein from Saccharomyces cerevisiae (strain ATCC 204508 / S288c) (Baker's yeast).